A 141-amino-acid polypeptide reads, in one-letter code: HTH-type transcriptional regulator MntR (141 aa).

One can recognise an HTH dtxR-type domain in the interval 1–63 (MPTPSMEDYI…YEKYRGLVLT (63 aa)). The Mn(2+) site is built by D8, E11, H77, E99, E102, and H103.

It belongs to the DtxR/MntR family. In terms of assembly, homodimer.

The protein localises to the cytoplasm. DNA binding is strongly activated by Mn(2+). Central regulator of manganese homeostasis. The protein is HTH-type transcriptional regulator MntR of Geobacillus kaustophilus (strain HTA426).